A 153-amino-acid chain; its full sequence is ORM1-like protein 3 (153 aa).

The tract at residues 1 to 17 (MNVGTAHSEVNPNTRVM) is important for ceramide level-sensing. Residues 1 to 21 (MNVGTAHSEVNPNTRVMNSRG) lie on the Cytoplasmic side of the membrane. Helical transmembrane passes span 22–42 (IWLSYVLAIGLLHVVLLSIPF) and 43–63 (VSVPVVWTLTNLIHNTGMYIF). The Cytoplasmic segment spans residues 64-94 (LHTVKGTPFETPDQGKARLLTHWEQMDYGVQ). A helical membrane pass occupies residues 95 to 117 (FTASRKFLTITPIVLYFLTSFYT). Over 118 to 121 (KYDQ) the chain is Extracellular. A helical transmembrane segment spans residues 122–142 (IHFVLNTVSLMSVLIPKLPQL). A Hydroxyproline modification is found at proline 137. The Cytoplasmic segment spans residues 143–153 (HGVRIFGINKY).

Belongs to the ORM family. In terms of assembly, ceramide-sensitive subunit of the serine palmitoyltransferase (SPT) complex, which is also composed of SPTLC1, SPTLC2/3 and SPTSSA/B. In terms of processing, when hydroxylated at Pro-137, ubiquitinated via 'Lys-48'-linkage, leading to proteasomal degradation. In endothelial cells, ORMDL3 proteasomal degradation is controlled by the sphingosine 1-phosphate receptor signaling pathway.

It localises to the endoplasmic reticulum membrane. Functionally, plays an essential role in the homeostatic regulation of sphingolipid de novo biosynthesis by modulating the activity of the serine palmitoyltransferase (SPT) in response to ceramide levels. When complexed to SPT, the binding of ceramides to its N-terminus stabilizes a conformation that block SPT substrate entry, hence preventing SPT catalytic activity. Through this mechanism, maintains ceramide levels at sufficient concentrations for the production of complex sphingolipids, but which prevents the accumulation of ceramides to levels that trigger apoptosis. The polypeptide is ORM1-like protein 3 (ORMDL3) (Ailuropoda melanoleuca (Giant panda)).